The sequence spans 444 residues: Gamma-glutamyl phosphate reductase (444 aa).

It belongs to the gamma-glutamyl phosphate reductase family.

It localises to the cytoplasm. It catalyses the reaction L-glutamate 5-semialdehyde + phosphate + NADP(+) = L-glutamyl 5-phosphate + NADPH + H(+). It functions in the pathway amino-acid biosynthesis; L-proline biosynthesis; L-glutamate 5-semialdehyde from L-glutamate: step 2/2. Its function is as follows. Catalyzes the NADPH-dependent reduction of L-glutamate 5-phosphate into L-glutamate 5-semialdehyde and phosphate. The product spontaneously undergoes cyclization to form 1-pyrroline-5-carboxylate. The protein is Gamma-glutamyl phosphate reductase of Albidiferax ferrireducens (strain ATCC BAA-621 / DSM 15236 / T118) (Rhodoferax ferrireducens).